Reading from the N-terminus, the 118-residue chain is Large ribosomal subunit protein bL20 (118 aa).

It belongs to the bacterial ribosomal protein bL20 family.

Functionally, binds directly to 23S ribosomal RNA and is necessary for the in vitro assembly process of the 50S ribosomal subunit. It is not involved in the protein synthesizing functions of that subunit. This is Large ribosomal subunit protein bL20 from Aeromonas hydrophila subsp. hydrophila (strain ATCC 7966 / DSM 30187 / BCRC 13018 / CCUG 14551 / JCM 1027 / KCTC 2358 / NCIMB 9240 / NCTC 8049).